Reading from the N-terminus, the 297-residue chain is MKVNGVEIEDTFAEAFDIKVSRILVTAASKRLAKIAAREATGYGTSVIGCPAEAGIDTYIPPKNTPDQRPGFTIIICNPSKKKLDHELLERVGMTILTAPTAAAFDALENAEEKVNTGFKLKFFGDGYEKEGEVQGRKVHIIPIMSGEFIVEEKFGIKSGVAGGNFFIMAETQGSALLAAEMAVDAIKSVEGVMTPFPGGIVASGSKVGSKKYDFLDASTNEKMCVTLKDEIEDSEVPEDVNGIYEIVIDGIDEESVKKAMKVGIEAACKVPGVKKISAGNYGGKLGKYKLHLHDLF.

It belongs to the FTR family. In terms of assembly, homotetramer.

The protein localises to the cytoplasm. It catalyses the reaction N-formylmethanofuran + 5,6,7,8-tetrahydromethanopterin + H(+) = N(5)-formyl-5,6,7,8-tetrahydromethanopterin + methanofuran. It participates in one-carbon metabolism; methanogenesis from CO(2); 5,10-methenyl-5,6,7,8-tetrahydromethanopterin from CO(2): step 2/3. Functionally, catalyzes the reversible transfer of a formyl group from formylmethanofuran (formyl-MFR) to tetrahydromethanopterin (H(4)MPT) to produce 5-formyl tetrahydromethanopterin (5-formyl-H(4)MPT) and methanofuran (MFR). This is Formylmethanofuran--tetrahydromethanopterin formyltransferase from Methanothermus fervidus (strain ATCC 43054 / DSM 2088 / JCM 10308 / V24 S).